The sequence spans 485 residues: Lysine--tRNA ligase (485 aa).

Mg(2+) is bound by residues Glu-391 and Glu-398.

The protein belongs to the class-II aminoacyl-tRNA synthetase family. As to quaternary structure, homodimer. It depends on Mg(2+) as a cofactor.

The protein localises to the cytoplasm. It catalyses the reaction tRNA(Lys) + L-lysine + ATP = L-lysyl-tRNA(Lys) + AMP + diphosphate. The sequence is that of Lysine--tRNA ligase from Blochmanniella floridana.